Here is a 158-residue protein sequence, read N- to C-terminus: SUMO-conjugating enzyme UBC9 (158 aa).

The 154-residue stretch at 4–157 (IALSRLAQER…VRAQAKKFSP (154 aa)) folds into the UBC core domain. Residues 13-18 (RKAWRK) are interaction with sumo1. The Glycyl thioester intermediate role is filled by Cys93.

This sequence belongs to the ubiquitin-conjugating enzyme family. In terms of assembly, forms a tight complex with RANGAP1 and RANBP2.

The protein resides in the nucleus. It functions in the pathway protein modification; protein sumoylation. Functionally, accepts the ubiquitin-like proteins SUMO1, SUMO2 and SUMO3 from the UBLE1A-UBLE1B E1 complex and catalyzes their covalent attachment to other proteins with the help of an E3 ligase such as RANBP2 or CBX4. Essential for nuclear architecture and chromosome segregation. The protein is SUMO-conjugating enzyme UBC9 (ube2i) of Pagrus major (Red sea bream).